We begin with the raw amino-acid sequence, 356 residues long: Tyrosine recombinase XerS (356 aa).

The 106-residue stretch at 16 to 121 folds into the Core-binding (CB) domain; sequence IMPWYVLDYY…ALSSLYKYLT (106 aa). Residues 169–354 enclose the Tyr recombinase domain; sequence AFLDYVDKEY…VNDEQKNALD (186 aa). Residues Arg210, Lys234, His306, Arg309, and His332 contribute to the active site. Tyr341 (O-(3'-phospho-DNA)-tyrosine intermediate) is an active-site residue.

Belongs to the 'phage' integrase family. XerS subfamily.

It localises to the cytoplasm. FtsK is required for recombination. In terms of biological role, site-specific tyrosine recombinase, which acts by catalyzing the cutting and rejoining of the recombining DNA molecules. Essential to convert dimers of the bacterial chromosome into monomers to permit their segregation at cell division. The protein is Tyrosine recombinase XerS of Streptococcus pyogenes serotype M18 (strain MGAS8232).